The chain runs to 156 residues: ATP synthase subunit b (156 aa).

The chain crosses the membrane as a helical span at residues 7–27; it reads LFLQAVVFAILVWFTMKFVWP.

It belongs to the ATPase B chain family. F-type ATPases have 2 components, F(1) - the catalytic core - and F(0) - the membrane proton channel. F(1) has five subunits: alpha(3), beta(3), gamma(1), delta(1), epsilon(1). F(0) has three main subunits: a(1), b(2) and c(10-14). The alpha and beta chains form an alternating ring which encloses part of the gamma chain. F(1) is attached to F(0) by a central stalk formed by the gamma and epsilon chains, while a peripheral stalk is formed by the delta and b chains.

Its subcellular location is the cell inner membrane. Its function is as follows. F(1)F(0) ATP synthase produces ATP from ADP in the presence of a proton or sodium gradient. F-type ATPases consist of two structural domains, F(1) containing the extramembraneous catalytic core and F(0) containing the membrane proton channel, linked together by a central stalk and a peripheral stalk. During catalysis, ATP synthesis in the catalytic domain of F(1) is coupled via a rotary mechanism of the central stalk subunits to proton translocation. Functionally, component of the F(0) channel, it forms part of the peripheral stalk, linking F(1) to F(0). This Polaromonas naphthalenivorans (strain CJ2) protein is ATP synthase subunit b.